A 120-amino-acid polypeptide reads, in one-letter code: MESKEELAANNLNGENAQQENEGGEQAPTQNEEESRHLGGGEGQKPGGNIRRGRVRRLVPNFRWAIPNRHIEHNEARDDVERFVGQMMEIKRKTREQQMRHYMRFQTPEPDNHYDFCLIP.

The tract at residues 1–54 (MESKEELAANNLNGENAQQENEGGEQAPTQNEEESRHLGGGEGQKPGGNIRRGR) is disordered. A compositionally biased stretch (low complexity) spans 8–27 (AANNLNGENAQQENEGGEQA). The tract at residues 31–90 (NEEESRHLGGGEGQKPGGNIRRGRVRRLVPNFRWAIPNRHIEHNEARDDVERFVGQMMEI) is interaction with SIRT2. Positions 31 to 120 (NEEESRHLGG…DNHYDFCLIP (90 aa)) are interaction with alpha-tubulin. Cysteine 117 serves as a coordination point for Zn(2+).

Belongs to the BEX family. As to quaternary structure, interacts with alpha-tubulin. Interacts with SIRT2. Post-translationally, ubiquitinated and degraded by the proteasome. In terms of tissue distribution, very high expression in heart, skeletal muscle, liver, and kidney. The levels of expression are uniform throughout the brain.

It localises to the cytoplasm. The protein resides in the cytoskeleton. It is found in the spindle pole. Its subcellular location is the nucleus. Its function is as follows. May play a role in microtubule deacetylation by negatively regulating the SIRT2 deacetylase activity toward alpha-tubulin and thereby participate in the control of cell cycle progression and genomic stability. In absence of reductive stress, acts as a pseudosubstrate for the CRL2(FEM1B) complex: associates with FEM1B via zinc, thereby preventing association between FEM1B and its substrates. The protein is Protein BEX4 of Homo sapiens (Human).